A 364-amino-acid chain; its full sequence is Salivary endonuclease (364 aa).

The N-terminal stretch at 1-24 (MSSFFLSISPLVLALFHVVVQVCS) is a signal peptide. The N-linked (GlcNAc...) asparagine glycan is linked to Asn285.

Belongs to the DNA/RNA non-specific endonuclease family. Requires Mg(2+) as cofactor. Saliva (at protein level). Female salivary gland.

It localises to the secreted. Its function is as follows. Hydrolyzes double-stranded DNA with no sequence specificity. Does not cleave ssDNA and RNA. May facilitate blood meal intake by lowering the local viscosity created by the release of host DNA. In Culex quinquefasciatus (Southern house mosquito), this protein is Salivary endonuclease.